The primary structure comprises 493 residues: Transcript termination protein A18 (493 aa).

Positions 100–256 (MIESKRPLYI…NSIINIAKLS (157 aa)) constitute a Helicase ATP-binding domain. ATP is bound at residue 113–120 (LACGFGKT). Positions 206-209 (DESH) match the DESH box motif.

It belongs to the helicase family. Poxviruses subfamily. In terms of assembly, interacts with G2. Might be part of a transcription complex composed at least of G2, A18, and H5.

It localises to the virion. In terms of biological role, DNA helicase which seems to act as a postreplicative transcription termination factor. Involved in ATP-dependent release of nascent RNA. Forms a stable complex with single-stranded DNA, and to a lesser extent RNA. In Homo sapiens (Human), this protein is Transcript termination protein A18.